The chain runs to 177 residues: Large ribosomal subunit protein uL6 (177 aa).

This sequence belongs to the universal ribosomal protein uL6 family. As to quaternary structure, part of the 50S ribosomal subunit.

This protein binds to the 23S rRNA, and is important in its secondary structure. It is located near the subunit interface in the base of the L7/L12 stalk, and near the tRNA binding site of the peptidyltransferase center. In Neisseria meningitidis serogroup B (strain ATCC BAA-335 / MC58), this protein is Large ribosomal subunit protein uL6.